A 217-amino-acid polypeptide reads, in one-letter code: MMAAGPRTSLLLAFALLCLPWTQVVGAFPAMSLSGLFANAVLRAQHLHQLAADTFKEFERTYIPGGQRYSIQNTQVAFCFSETIPAPTGKNEAQQKSDLELLRISLLLIQSWLGPLQFLSRVFTNSLVFGTSDRVYEKLKDLEEGILALMRELEDGTPRAGQILKQTYDKFDTNMRSDDALLKNYGLLSCFRKDLHKTETYLRVMKCRRFGEASCAF.

The N-terminal stretch at 1–26 is a signal peptide; sequence MMAAGPRTSLLLAFALLCLPWTQVVG. Residue histidine 46 coordinates Zn(2+). Cysteine 79 and cysteine 190 are disulfide-bonded. Residue serine 132 is modified to Phosphoserine. A Zn(2+)-binding site is contributed by glutamate 199. Cysteines 207 and 215 form a disulfide.

It belongs to the somatotropin/prolactin family.

Its subcellular location is the secreted. Functionally, plays an important role in growth control. Its major role in stimulating body growth is to stimulate the liver and other tissues to secrete IGF1. It stimulates both the differentiation and proliferation of myoblasts. It also stimulates amino acid uptake and protein synthesis in muscle and other tissues. This is Somatotropin (GH1) from Bos mutus grunniens (Wild yak).